Consider the following 319-residue polypeptide: Acetyl esterase (319 aa).

An Involved in the stabilization of the negatively charged intermediate by the formation of the oxyanion hole motif is present at residues 91–93 (HGG). Residues S165, D262, and H292 contribute to the active site.

Belongs to the 'GDXG' lipolytic enzyme family. As to quaternary structure, homodimer. Interacts with MalT and MelA.

It is found in the cytoplasm. Displays esterase activity towards short chain fatty esters (acyl chain length of up to 8 carbons). Able to hydrolyze triacetylglycerol (triacetin) and tributyrylglycerol (tributyrin), but not trioleylglycerol (triolein) or cholesterol oleate. Negatively regulates MalT activity by antagonizing maltotriose binding. Inhibits MelA galactosidase activity. The protein is Acetyl esterase of Escherichia coli O157:H7.